The chain runs to 261 residues: MIETYSQPSPRSVAAGPPVSMKIFMYLLTVFLITQMIGSALFAAYLHRRLDKIEDERNLHEDFVFIKTIQRCKQGEGSLSLLNCEEIRSQFEDLVKGIMQSKEVKKKEKSFEMHKGDQDPQIAAHVISEASSKTASVLQWAPKGYYTLSTNLVTLENGRQLAVKRQGIYYIYAQVTFCSNRDAAGQAPFIASLCLRSPSGSERILLRAANTHSSSKPCGQQSIHLGGVFELQPGASVFVNVTDPSQVSHGTGFTSFGLLKL.

Residues methionine 1 to lysine 22 lie on the Cytoplasmic side of the membrane. Residues isoleucine 23–alanine 43 traverse the membrane as a helical; Signal-anchor for type II membrane protein segment. Residues alanine 44–asparagine 240 lie on the Extracellular side of the membrane. In terms of domain architecture, THD spans isoleucine 122 to leucine 261. Residues cysteine 178 and cysteine 218 are joined by a disulfide bond. N-linked (GlcNAc...) asparagine glycosylation is present at asparagine 240.

It belongs to the tumor necrosis factor family. Homotrimer. Interacts with CD28. CD40 ligand, soluble form: Exists as either a monomer or a homotrimer. Forms a ternary complex between CD40 and integrins for CD40-CD40LG signaling. The soluble form derives from the membrane form by proteolytic processing.

The protein localises to the cell membrane. It is found in the cell surface. It localises to the secreted. Functionally, cytokine that acts as a ligand to CD40/TNFRSF5. Costimulates T-cell proliferation and cytokine production. Its cross-linking on T-cells generates a costimulatory signal which enhances the production of IL4 and IL10 in conjunction with the TCR/CD3 ligation and CD28 costimulation. Induces the activation of NF-kappa-B. Induces the activation of kinases MAPK8 and PAK2 in T-cells. Mediates B-cell proliferation in the absence of co-stimulus as well as IgE production in the presence of IL4. Involved in immunoglobulin class switching. Acts as a ligand for integrins, specifically ITGA5:ITGB1 and ITGAV:ITGB3; both integrins and the CD40 receptor are required for activation of CD40-CD40LG signaling, which have cell-type dependent effects, such as B-cell activation, NF-kappa-B signaling and anti-apoptotic signaling. This is CD40 ligand (CD40LG) from Sus scrofa (Pig).